The primary structure comprises 262 residues: Ribosomal RNA small subunit methyltransferase A (262 aa).

Asn-14, Leu-16, Gly-41, Glu-63, Asp-85, and Asn-105 together coordinate S-adenosyl-L-methionine.

This sequence belongs to the class I-like SAM-binding methyltransferase superfamily. rRNA adenine N(6)-methyltransferase family. RsmA subfamily.

It localises to the cytoplasm. The catalysed reaction is adenosine(1518)/adenosine(1519) in 16S rRNA + 4 S-adenosyl-L-methionine = N(6)-dimethyladenosine(1518)/N(6)-dimethyladenosine(1519) in 16S rRNA + 4 S-adenosyl-L-homocysteine + 4 H(+). Functionally, specifically dimethylates two adjacent adenosines (A1518 and A1519) in the loop of a conserved hairpin near the 3'-end of 16S rRNA in the 30S particle. May play a critical role in biogenesis of 30S subunits. This is Ribosomal RNA small subunit methyltransferase A from Maridesulfovibrio salexigens (strain ATCC 14822 / DSM 2638 / NCIMB 8403 / VKM B-1763) (Desulfovibrio salexigens).